The chain runs to 245 residues: 5'-nucleotidase SurE (245 aa).

Residues aspartate 8, aspartate 9, serine 39, and asparagine 97 each contribute to the a divalent metal cation site.

Belongs to the SurE nucleotidase family. It depends on a divalent metal cation as a cofactor.

The protein localises to the cytoplasm. It catalyses the reaction a ribonucleoside 5'-phosphate + H2O = a ribonucleoside + phosphate. Its function is as follows. Nucleotidase that shows phosphatase activity on nucleoside 5'-monophosphates. This chain is 5'-nucleotidase SurE, found in Clostridium kluyveri (strain NBRC 12016).